Consider the following 882-residue polypeptide: Translation initiation factor IF-2 (882 aa).

The segment at 28-294 is disordered; the sequence is GIRKSADDSV…SSLQQGFQKP (267 aa). Over residues 67–81 the composition is skewed to polar residues; sequence STLNIPGTGGKSKSV. Basic and acidic residues predominate over residues 92-209; it reads VKRDPQEAER…RMAEENKWTD (118 aa). Over residues 244 to 258 the composition is skewed to basic residues; it reads GRGRNAKAARPKKGN. Basic and acidic residues predominate over residues 259 to 272; sequence KHAESKADREEARA. A tr-type G domain is found at 381–550; it reads PRAPVVTIMG…LLQAEVLELK (170 aa). A G1 region spans residues 390–397; that stretch reads GHVDHGKT. GTP is bound at residue 390–397; the sequence is GHVDHGKT. The segment at 415 to 419 is G2; the sequence is GITQH. The segment at 436–439 is G3; that stretch reads DTPG. GTP-binding positions include 436–440 and 490–493; these read DTPGH and NKID. The G4 stretch occupies residues 490–493; that stretch reads NKID. Residues 526-528 form a G5 region; sequence SAK. Position 800 is an N6-acetyllysine (K800).

It belongs to the TRAFAC class translation factor GTPase superfamily. Classic translation factor GTPase family. IF-2 subfamily.

The protein resides in the cytoplasm. Functionally, one of the essential components for the initiation of protein synthesis. Protects formylmethionyl-tRNA from spontaneous hydrolysis and promotes its binding to the 30S ribosomal subunits. Also involved in the hydrolysis of GTP during the formation of the 70S ribosomal complex. This Shigella flexneri serotype 5b (strain 8401) protein is Translation initiation factor IF-2.